A 101-amino-acid polypeptide reads, in one-letter code: Urease subunit beta (101 aa).

This sequence belongs to the urease beta subunit family. As to quaternary structure, heterotrimer of UreA (gamma), UreB (beta) and UreC (alpha) subunits. Three heterotrimers associate to form the active enzyme.

It localises to the cytoplasm. It catalyses the reaction urea + 2 H2O + H(+) = hydrogencarbonate + 2 NH4(+). It participates in nitrogen metabolism; urea degradation; CO(2) and NH(3) from urea (urease route): step 1/1. In Azoarcus sp. (strain BH72), this protein is Urease subunit beta.